We begin with the raw amino-acid sequence, 207 residues long: Porin MspD (207 aa).

Positions 1-24 are cleaved as a signal peptide; it reads MRYLVMMFALLVSVTLVSPRPANA.

Belongs to the mycobacterial porin (TC 1.B.24) family. Octamers. Probably forms a goblet with the wide end on the exterior of the outer membrane and a central channel. It is not known if mixed oligomers of MspD with other Msp subunits form in vivo.

The protein resides in the cell outer membrane. Its subcellular location is the secreted. The protein localises to the cell wall. In terms of biological role, a backup porin induced when MspA, the major porin, is deleted. It probably forms a water-filled channel which favors the permeation of cations. There are about 2400 porins in wild-type, 800 in an mspA deletion and 150 in a double mspA-mspC deletion. The sequence is that of Porin MspD (mspD) from Mycolicibacterium smegmatis (strain ATCC 700084 / mc(2)155) (Mycobacterium smegmatis).